We begin with the raw amino-acid sequence, 313 residues long: E3 ubiquitin-protein ligase SINA-like 2 (313 aa).

A disordered region spans residues 1 to 26 (MSGEASTSRRKRQRVPSSVESVENGG). An RING-type zinc finger spans residues 44 to 80 (CPICCHALTSPIFQCDNGHIACSSCCTKLRNKCPSCA). The tract at residues 94–277 (VVEAVMVTCP…LKMEICIRKL (184 aa)) is SBD. The segment at 97-155 (AVMVTCPNVKHGCTEKFSYGKELIHEKDCRFALCYCPAPNCNYSGVYKDLYSHFYVNHY) adopts an SIAH-type zinc-finger fold. Positions 102, 109, 121, 125, 132, 137, 149, and 154 each coordinate Zn(2+). A disordered region spans residues 278 to 313 (KKDEEEADEDEESEEEEDDDDDDDDDDEEEDADEEE). Positions 282–313 (EEADEDEESEEEEDDDDDDDDDDEEEDADEEE) are enriched in acidic residues.

This sequence belongs to the SINA (Seven in absentia) family.

The enzyme catalyses S-ubiquitinyl-[E2 ubiquitin-conjugating enzyme]-L-cysteine + [acceptor protein]-L-lysine = [E2 ubiquitin-conjugating enzyme]-L-cysteine + N(6)-ubiquitinyl-[acceptor protein]-L-lysine.. It functions in the pathway protein modification; protein ubiquitination. Its function is as follows. E3 ubiquitin-protein ligase that mediates ubiquitination and subsequent proteasomal degradation of target proteins. E3 ubiquitin ligases accept ubiquitin from an E2 ubiquitin-conjugating enzyme in the form of a thioester and then directly transfers the ubiquitin to targeted substrates. It probably triggers the ubiquitin-mediated degradation of different substrates. In Arabidopsis thaliana (Mouse-ear cress), this protein is E3 ubiquitin-protein ligase SINA-like 2.